Reading from the N-terminus, the 130-residue chain is Small ribosomal subunit protein uS9 (130 aa).

It belongs to the universal ribosomal protein uS9 family.

The protein is Small ribosomal subunit protein uS9 of Exiguobacterium sp. (strain ATCC BAA-1283 / AT1b).